We begin with the raw amino-acid sequence, 237 residues long: ATP-dependent dethiobiotin synthetase BioD (237 aa).

21 to 26 (GVGKTV) contributes to the ATP binding site. Residue Thr25 coordinates Mg(2+). Lys48 is a catalytic residue. Position 52 (Thr52) interacts with substrate. Residues Asp56, 117 to 120 (EALG), 177 to 178 (SC), and 209 to 211 (PYL) contribute to the ATP site. Residues Asp56 and Glu117 each contribute to the Mg(2+) site.

The protein belongs to the dethiobiotin synthetase family. As to quaternary structure, homodimer. Requires Mg(2+) as cofactor.

The protein localises to the cytoplasm. The catalysed reaction is (7R,8S)-7,8-diammoniononanoate + CO2 + ATP = (4R,5S)-dethiobiotin + ADP + phosphate + 3 H(+). The enzyme catalyses (7R,8S)-8-amino-7-(carboxyamino)nonanoate + ATP = (4R,5S)-dethiobiotin + ADP + phosphate + H(+). Its pathway is cofactor biosynthesis; biotin biosynthesis; biotin from 7,8-diaminononanoate: step 1/2. Catalyzes a mechanistically unusual reaction, the ATP-dependent insertion of CO2 between the N7 and N8 nitrogen atoms of 7,8-diaminopelargonic acid (DAPA, also called 7,8-diammoniononanoate) to form a ureido ring. This cyanobacterium does not encode bioA (which catalyzes the formation of the precursor for this reaction in the cannonical pathway), instead it encodes bioU, which replaces bioA and also performs the first half of the cannonical BioD reaction. Thus in this bacteria BioD has a different substrate. In Synechocystis replacement of bioU by bioA from E.coli leads to biotin synthesis, showing BioD can use the 'cannonical' 7,8-diammoniononanoate as a substrate. This Synechocystis sp. (strain ATCC 27184 / PCC 6803 / Kazusa) protein is ATP-dependent dethiobiotin synthetase BioD.